We begin with the raw amino-acid sequence, 105 residues long: MKNKIKIRLKSFDHRSLDQATKEIVSAVKRTFANINGPIPLPKKIGRFTVNRSPHVHKKSREQFEIRTHKRLLVIDDPNPAVVDALSKVDLAAGVDVVIELESGE.

It belongs to the universal ribosomal protein uS10 family. Part of the 30S ribosomal subunit.

Involved in the binding of tRNA to the ribosomes. This is Small ribosomal subunit protein uS10 from Rickettsia peacockii (strain Rustic).